A 77-amino-acid polypeptide reads, in one-letter code: Small ribosomal subunit protein bS16c (77 aa).

Belongs to the bacterial ribosomal protein bS16 family.

It is found in the plastid. The protein localises to the chloroplast. This Eucalyptus globulus subsp. globulus (Tasmanian blue gum) protein is Small ribosomal subunit protein bS16c.